The chain runs to 246 residues: Anamorsin homolog (246 aa).

An N-terminal SAM-like domain region spans residues 1–124 (MRVVVVDLDG…ARGTAFSLKS (124 aa)). Positions 125-158 (RAVRVVTADAGWGADADVDDELIDESALLTELDV) are linker. [2Fe-2S] cluster-binding residues include cysteine 168, cysteine 177, cysteine 180, and cysteine 182. Residues 168–182 (CDVGAGKKACKNCTC) are fe-S binding site A. Cysteine 206, cysteine 209, cysteine 217, and cysteine 220 together coordinate [4Fe-4S] cluster. 2 consecutive short sequence motifs (cx2C motif) follow at residues 206–209 (CGNC) and 217–220 (CAGC). Residues 206–220 (CGNCALGDAFRCAGC) are fe-S binding site B.

This sequence belongs to the anamorsin family. As to quaternary structure, monomer. [2Fe-2S] cluster serves as cofactor. It depends on [4Fe-4S] cluster as a cofactor.

The protein localises to the cytoplasm. Its subcellular location is the mitochondrion intermembrane space. In terms of biological role, component of the cytosolic iron-sulfur (Fe-S) protein assembly (CIA) machinery. Required for the maturation of extramitochondrial Fe-S proteins. Part of an electron transfer chain functioning in an early step of cytosolic Fe-S biogenesis, facilitating the de novo assembly of a [4Fe-4S] cluster on the cytosolic Fe-S scaffold complex. Electrons are transferred from NADPH via a FAD- and FMN-containing diflavin oxidoreductase. Together with the diflavin oxidoreductase, also required for the assembly of the diferric tyrosyl radical cofactor of ribonucleotide reductase (RNR), probably by providing electrons for reduction during radical cofactor maturation in the catalytic small subunit. The protein is Anamorsin homolog of Ostreococcus tauri.